A 440-amino-acid chain; its full sequence is Chromosomal replication initiator protein DnaA (440 aa).

The tract at residues 1 to 74 is domain I, interacts with DnaA modulators; the sequence is MNPSQILENL…VQSGNKAIIN (74 aa). The interval 74–99 is domain II; sequence NIQAQSTKQSNKSTKIDIAHIQAQST. Residues 100–316 form a domain III, AAA+ region region; it reads ILNPSFTFES…GIIISLNAYA (217 aa). Residues Gly-146, Gly-148, Lys-149, and Thr-150 each coordinate ATP. The interval 317–440 is domain IV, binds dsDNA; the sequence is TILGQEITLE…KNKILIKSQS (124 aa).

It belongs to the DnaA family. As to quaternary structure, oligomerizes as a right-handed, spiral filament on DNA at oriC.

It localises to the cytoplasm. Its function is as follows. Plays an essential role in the initiation and regulation of chromosomal replication. ATP-DnaA binds to the origin of replication (oriC) to initiate formation of the DNA replication initiation complex once per cell cycle. Binds the DnaA box (a 9 base pair repeat at the origin) and separates the double-stranded (ds)DNA. Forms a right-handed helical filament on oriC DNA; dsDNA binds to the exterior of the filament while single-stranded (ss)DNA is stabiized in the filament's interior. The ATP-DnaA-oriC complex binds and stabilizes one strand of the AT-rich DNA unwinding element (DUE), permitting loading of DNA polymerase. After initiation quickly degrades to an ADP-DnaA complex that is not apt for DNA replication. Binds acidic phospholipids. This is Chromosomal replication initiator protein DnaA from Campylobacter jejuni subsp. doylei (strain ATCC BAA-1458 / RM4099 / 269.97).